The following is a 357-amino-acid chain: 4-hydroxy-2-oxovalerate aldolase (357 aa).

The disordered stretch occupies residues 1-21; the sequence is MSQEAARDAAAGRPVQIHDPT. The region spanning 15-265 is the Pyruvate carboxyltransferase domain; sequence VQIHDPTLRD…RTGIDLYRLL (251 aa). 23-24 is a binding site for substrate; it reads RD. Aspartate 24 is a binding site for Mn(2+). Histidine 27 (proton acceptor) is an active-site residue. Substrate contacts are provided by serine 177 and histidine 204. Mn(2+) contacts are provided by histidine 204 and histidine 206.

Belongs to the 4-hydroxy-2-oxovalerate aldolase family.

It catalyses the reaction (S)-4-hydroxy-2-oxopentanoate = acetaldehyde + pyruvate. Its function is as follows. Involved in the biosynthesis of the peptidyl nucleoside antibiotic nikkomycin. The sequence is that of 4-hydroxy-2-oxovalerate aldolase from Streptomyces tendae.